The sequence spans 242 residues: N-alpha-acetyltransferase 60 (242 aa).

Residues 1–192 (MTEVVPSSAL…GGHPPWTILD (192 aa)) are Cytoplasmic-facing. One can recognise an N-acetyltransferase domain in the interval 13 to 182 (VSLRLLCHDD…DGFTYVLYIN (170 aa)). Tyr38 contributes to the substrate binding site. At Lys79 the chain carries N6-acetyllysine; by autocatalysis. Tyr97 is an active-site residue. Residue Leu99 coordinates substrate. 101 to 103 (LGV) lines the acetyl-CoA pocket. 3 positions are modified to N6-acetyllysine; by autocatalysis: Lys105, Lys109, and Lys121. 109 to 114 (KHGIGS) contributes to the acetyl-CoA binding site. His138 is a catalytic residue. Residues Asn143 and 150-153 (YENR) each bind acetyl-CoA. The residue at position 156 (Lys156) is an N6-acetyllysine; by autocatalysis. Positions 162 to 173 (PYYYSIRGVLKD) are required for homodimerization. Residue Tyr165 coordinates substrate. Positions 193 to 236 (YIQHLGSALASLSPCSIPHRVYRQAHSLLCSFLPWSGISSKSGI) form an intramembrane region, helical. Residues 237–242 (EYSRTM) are Cytoplasmic-facing.

It belongs to the acetyltransferase family. NAA60 subfamily. In terms of assembly, monomer and homodimer; monomer in presence of substrate and homodimer in its absence. Acetylated: autoacetylation is required for optimal acetyltransferase activity.

It is found in the golgi apparatus membrane. The catalysed reaction is N-terminal L-methionyl-[transmembrane protein] + acetyl-CoA = N-terminal N(alpha)-acetyl-L-methionyl-[transmembrane protein] + CoA + H(+). It carries out the reaction L-lysyl-[protein] + acetyl-CoA = N(6)-acetyl-L-lysyl-[protein] + CoA + H(+). Its function is as follows. N-alpha-acetyltransferase that specifically mediates the acetylation of N-terminal residues of the transmembrane proteins, with a strong preference for N-termini facing the cytosol. Displays N-terminal acetyltransferase activity towards a range of N-terminal sequences including those starting with Met-Lys, Met-Val, Met-Ala and Met-Met. Required for normal chromosomal segregation during anaphase. May also show histone acetyltransferase activity; such results are however unclear in vivo and would require additional experimental evidences. In Homo sapiens (Human), this protein is N-alpha-acetyltransferase 60.